We begin with the raw amino-acid sequence, 183 residues long: Ferritin heavy polypeptide-like 17 (183 aa).

Residues 11 to 160 (QKYDTNCDAA…GYVSNLRKIC (150 aa)) form the Ferritin-like diiron domain. Fe cation-binding residues include E28, H66, E108, and Q142.

Belongs to the ferritin family. In terms of tissue distribution, testis specific. Also expressed in several cancers.

The polypeptide is Ferritin heavy polypeptide-like 17 (FTHL17) (Homo sapiens (Human)).